Consider the following 117-residue polypeptide: Ig heavy chain V region MOPC 104E (117 aa).

One can recognise an Ig-like domain in the interval Glu1–Ser116. Cysteines 22 and 96 form a disulfide. The N-linked (GlcNAc...) (high mannose) asparagine; atypical glycan is linked to Asn55.

The protein is Ig heavy chain V region MOPC 104E of Mus musculus (Mouse).